We begin with the raw amino-acid sequence, 412 residues long: Diphosphomevalonate decarboxylase MVD1, peroxisomal (412 aa).

Tyrosine 23–lysine 26 contacts (R)-5-diphosphomevalonate. The Peroxisomal targeting signal PTS2 motif lies at serine 40 to leucine 48. (R)-5-diphosphomevalonate contacts are provided by residues arginine 78, serine 161 to arginine 166, and threonine 217.

It belongs to the diphosphomevalonate decarboxylase family. In terms of assembly, homodimer.

Its subcellular location is the peroxisome. It catalyses the reaction (R)-5-diphosphomevalonate + ATP = isopentenyl diphosphate + ADP + phosphate + CO2. The protein operates within isoprenoid biosynthesis; isopentenyl diphosphate biosynthesis via mevalonate pathway; isopentenyl diphosphate from (R)-mevalonate: step 3/3. Functionally, performs the first committed step in the biosynthesis of isoprene-containing compounds such as sterols and terpenoids. Is specific for (R)-5-diphosphomevalonate (MVAPP). The catalytic efficiency with (R)-5-phosphomevalonate (MVAP) as substrate is 10000-fold lower than for MVAPP. Can complement a yeast mutant defective in MVD activity. This chain is Diphosphomevalonate decarboxylase MVD1, peroxisomal, found in Arabidopsis thaliana (Mouse-ear cress).